Consider the following 343-residue polypeptide: S-adenosylmethionine:tRNA ribosyltransferase-isomerase (343 aa).

It belongs to the QueA family. As to quaternary structure, monomer.

The protein resides in the cytoplasm. The catalysed reaction is 7-aminomethyl-7-carbaguanosine(34) in tRNA + S-adenosyl-L-methionine = epoxyqueuosine(34) in tRNA + adenine + L-methionine + 2 H(+). Its pathway is tRNA modification; tRNA-queuosine biosynthesis. Its function is as follows. Transfers and isomerizes the ribose moiety from AdoMet to the 7-aminomethyl group of 7-deazaguanine (preQ1-tRNA) to give epoxyqueuosine (oQ-tRNA). The protein is S-adenosylmethionine:tRNA ribosyltransferase-isomerase of Natranaerobius thermophilus (strain ATCC BAA-1301 / DSM 18059 / JW/NM-WN-LF).